A 195-amino-acid chain; its full sequence is Imidazoleglycerol-phosphate dehydratase (195 aa).

This sequence belongs to the imidazoleglycerol-phosphate dehydratase family.

The protein resides in the cytoplasm. The enzyme catalyses D-erythro-1-(imidazol-4-yl)glycerol 3-phosphate = 3-(imidazol-4-yl)-2-oxopropyl phosphate + H2O. It participates in amino-acid biosynthesis; L-histidine biosynthesis; L-histidine from 5-phospho-alpha-D-ribose 1-diphosphate: step 6/9. The chain is Imidazoleglycerol-phosphate dehydratase from Cereibacter sphaeroides (strain ATCC 17029 / ATH 2.4.9) (Rhodobacter sphaeroides).